We begin with the raw amino-acid sequence, 273 residues long: Shikimate dehydrogenase (NADP(+)) (273 aa).

Shikimate contacts are provided by residues 14 to 16 (SKS) and T61. K65 functions as the Proton acceptor in the catalytic mechanism. An NADP(+)-binding site is contributed by D77. 2 residues coordinate shikimate: N86 and D102. NADP(+) is bound by residues 127 to 131 (GAGGA), 151 to 156 (NRTGAR), and M215. Y217 lines the shikimate pocket. Position 239 (G239) interacts with NADP(+).

This sequence belongs to the shikimate dehydrogenase family. In terms of assembly, homodimer.

It catalyses the reaction shikimate + NADP(+) = 3-dehydroshikimate + NADPH + H(+). It functions in the pathway metabolic intermediate biosynthesis; chorismate biosynthesis; chorismate from D-erythrose 4-phosphate and phosphoenolpyruvate: step 4/7. Functionally, involved in the biosynthesis of the chorismate, which leads to the biosynthesis of aromatic amino acids. Catalyzes the reversible NADPH linked reduction of 3-dehydroshikimate (DHSA) to yield shikimate (SA). The chain is Shikimate dehydrogenase (NADP(+)) from Thioalkalivibrio sulfidiphilus (strain HL-EbGR7).